A 295-amino-acid chain; its full sequence is Acetylglutamate kinase (295 aa).

Residues 70–71, arginine 92, and asparagine 191 contribute to the substrate site; that span reads GG.

Belongs to the acetylglutamate kinase family. ArgB subfamily.

The protein localises to the cytoplasm. It carries out the reaction N-acetyl-L-glutamate + ATP = N-acetyl-L-glutamyl 5-phosphate + ADP. Its pathway is amino-acid biosynthesis; L-arginine biosynthesis; N(2)-acetyl-L-ornithine from L-glutamate: step 2/4. In terms of biological role, catalyzes the ATP-dependent phosphorylation of N-acetyl-L-glutamate. This Mycolicibacterium paratuberculosis (strain ATCC BAA-968 / K-10) (Mycobacterium paratuberculosis) protein is Acetylglutamate kinase.